The following is a 348-amino-acid chain: Adenosine deaminase (348 aa).

Zn(2+)-binding residues include His16 and His18. Substrate is bound by residues His18, Asp20, and Gly174. His201 contributes to the Zn(2+) binding site. Glu204 serves as the catalytic Proton donor. Asp282 lines the Zn(2+) pocket.

This sequence belongs to the metallo-dependent hydrolases superfamily. Adenosine and AMP deaminases family. Adenosine deaminase subfamily. Zn(2+) is required as a cofactor.

The enzyme catalyses adenosine + H2O + H(+) = inosine + NH4(+). It carries out the reaction 2'-deoxyadenosine + H2O + H(+) = 2'-deoxyinosine + NH4(+). Functionally, catalyzes the hydrolytic deamination of adenosine and 2-deoxyadenosine. The sequence is that of Adenosine deaminase from Clostridium kluyveri (strain ATCC 8527 / DSM 555 / NBRC 12016 / NCIMB 10680 / K1).